Consider the following 548-residue polypeptide: Chaperonin GroEL (548 aa).

Residues 29–32, lysine 50, 86–90, glycine 414, 478–480, and aspartate 494 each bind ATP; these read TLGP, DGTTT, and NAA.

It belongs to the chaperonin (HSP60) family. Forms a cylinder of 14 subunits composed of two heptameric rings stacked back-to-back. Interacts with the co-chaperonin GroES.

Its subcellular location is the cytoplasm. It carries out the reaction ATP + H2O + a folded polypeptide = ADP + phosphate + an unfolded polypeptide.. Its function is as follows. Together with its co-chaperonin GroES, plays an essential role in assisting protein folding. The GroEL-GroES system forms a nano-cage that allows encapsulation of the non-native substrate proteins and provides a physical environment optimized to promote and accelerate protein folding. This chain is Chaperonin GroEL, found in Alcanivorax borkumensis (strain ATCC 700651 / DSM 11573 / NCIMB 13689 / SK2).